The sequence spans 152 residues: Endoribonuclease YbeY (152 aa).

Zn(2+)-binding residues include histidine 113, histidine 117, and histidine 123.

It belongs to the endoribonuclease YbeY family. It depends on Zn(2+) as a cofactor.

It is found in the cytoplasm. Functionally, single strand-specific metallo-endoribonuclease involved in late-stage 70S ribosome quality control and in maturation of the 3' terminus of the 16S rRNA. This chain is Endoribonuclease YbeY, found in Wolbachia pipientis subsp. Culex pipiens (strain wPip).